The primary structure comprises 83 residues: MANHKSAAKRAKQSEARRLRNKSTRSSMNTAVKKVRTAKEAGTDNATDLLNSAKSLIAKAAKKGVIHQNTAARKISRLTKSLG.

Residues 1–11 (MANHKSAAKRA) show a composition bias toward basic residues. Residues 1-44 (MANHKSAAKRAKQSEARRLRNKSTRSSMNTAVKKVRTAKEAGTD) form a disordered region.

Belongs to the bacterial ribosomal protein bS20 family.

Binds directly to 16S ribosomal RNA. The sequence is that of Small ribosomal subunit protein bS20 from Desulforapulum autotrophicum (strain ATCC 43914 / DSM 3382 / VKM B-1955 / HRM2) (Desulfobacterium autotrophicum).